A 532-amino-acid chain; its full sequence is Nitrogenase molybdenum-iron protein alpha chain (532 aa).

3 residues coordinate [8Fe-7S] cluster: cysteine 62, cysteine 88, and cysteine 153. [7Fe-Mo-9S-C-homocitryl] cluster-binding residues include cysteine 271 and histidine 489.

It belongs to the NifD/NifK/NifE/NifN family. As to quaternary structure, tetramer of two alpha and two beta chains. Forms complex with the iron protein (nitrogenase component 2). The cofactor is [8Fe-7S] cluster. [7Fe-Mo-9S-C-homocitryl] cluster serves as cofactor.

The enzyme catalyses N2 + 8 reduced [2Fe-2S]-[ferredoxin] + 16 ATP + 16 H2O = H2 + 8 oxidized [2Fe-2S]-[ferredoxin] + 2 NH4(+) + 16 ADP + 16 phosphate + 6 H(+). In terms of biological role, this molybdenum-iron protein is part of the nitrogenase complex that catalyzes the key enzymatic reactions in nitrogen fixation. This Methanosarcina barkeri protein is Nitrogenase molybdenum-iron protein alpha chain (nifD2).